The chain runs to 335 residues: 2-acylglycerol O-acyltransferase 1 (335 aa).

2 helical membrane passes run 24–44 (WVFS…SLVL) and 47–67 (LWLI…TPQA). Residues Asn-77, Asn-125, and Asn-180 are each glycosylated (N-linked (GlcNAc...) asparagine).

The protein belongs to the diacylglycerol acyltransferase family.

It localises to the endoplasmic reticulum membrane. It catalyses the reaction a 2-acylglycerol + an acyl-CoA = a 1,2-diacylglycerol + CoA. It carries out the reaction a 2-acylglycerol + an acyl-CoA = a 1,2-diacyl-sn-glycerol + CoA. The enzyme catalyses a 2-acylglycerol + an acyl-CoA = a 2,3-diacyl-sn-glycerol + CoA. The catalysed reaction is a 1-acylglycerol + an acyl-CoA = a 1,2-diacylglycerol + CoA. It catalyses the reaction a 1-acylglycerol + an acyl-CoA = a 1,3-diacylglycerol + CoA. It carries out the reaction a 1-acyl-sn-glycerol + an acyl-CoA = a 1,3-diacyl-sn-glycerol + CoA. The enzyme catalyses a 3-acyl-sn-glycerol + an acyl-CoA = a 1,3-diacyl-sn-glycerol + CoA. The protein operates within glycerolipid metabolism; triacylglycerol biosynthesis. In terms of biological role, involved in glycerolipid synthesis and lipid metabolism. Catalyzes the formation of diacylglycerol, the precursor of triacylglycerol, by transferring the acyl chain of a fatty acyl-CoA to a monoacylglycerol, mainly at the sn-1 or sn-3 positions. It uses both sn-2-monoacylglycerol (2-acylglycerol) and sn-1-monoacylglycerol (1-acyl-sn-glycerol) equally well as substrates, and uses sn-3-monoacylglycerol (3-acyl-sn-glycerol) with lower efficiency. The polypeptide is 2-acylglycerol O-acyltransferase 1 (mogat1) (Xenopus tropicalis (Western clawed frog)).